A 181-amino-acid polypeptide reads, in one-letter code: Inorganic pyrophosphatase (181 aa).

3 residues coordinate substrate: K16, R30, and Y42. Residues D52, D57, and D89 each coordinate Mg(2+). Y126 contributes to the substrate binding site.

It belongs to the PPase family. In terms of assembly, homohexamer. Mg(2+) is required as a cofactor.

It localises to the cytoplasm. The catalysed reaction is diphosphate + H2O = 2 phosphate + H(+). Its function is as follows. Catalyzes the hydrolysis of inorganic pyrophosphate (PPi) forming two phosphate ions. This is Inorganic pyrophosphatase from Ureaplasma parvum serovar 3 (strain ATCC 700970).